A 332-amino-acid chain; its full sequence is Acetyl-coenzyme A carboxylase carboxyl transferase subunit alpha (332 aa).

A CoA carboxyltransferase C-terminal domain is found at 44 to 298; the sequence is QLESRAQNLR…KETLVNNLEE (255 aa).

Belongs to the AccA family. Acetyl-CoA carboxylase is a heterohexamer composed of biotin carboxyl carrier protein (AccB), biotin carboxylase (AccC) and two subunits each of ACCase subunit alpha (AccA) and ACCase subunit beta (AccD).

The protein localises to the cytoplasm. It catalyses the reaction N(6)-carboxybiotinyl-L-lysyl-[protein] + acetyl-CoA = N(6)-biotinyl-L-lysyl-[protein] + malonyl-CoA. The protein operates within lipid metabolism; malonyl-CoA biosynthesis; malonyl-CoA from acetyl-CoA: step 1/1. Functionally, component of the acetyl coenzyme A carboxylase (ACC) complex. First, biotin carboxylase catalyzes the carboxylation of biotin on its carrier protein (BCCP) and then the CO(2) group is transferred by the carboxyltransferase to acetyl-CoA to form malonyl-CoA. In Crocosphaera subtropica (strain ATCC 51142 / BH68) (Cyanothece sp. (strain ATCC 51142)), this protein is Acetyl-coenzyme A carboxylase carboxyl transferase subunit alpha.